Consider the following 342-residue polypeptide: NADH-quinone oxidoreductase subunit H 1 (342 aa).

The next 8 helical transmembrane spans lie at 7–27, 78–98, 120–140, 166–186, 193–213, 245–265, 284–304, and 322–342; these read FLLE…VIAM, ALFI…GAVI, IGVL…MIGG, MGLS…GEIV, WWNI…SFAE, LFAE…FYFG, ILGT…FMWV, and KIMI…ILLF.

This sequence belongs to the complex I subunit 1 family. As to quaternary structure, NDH-1 is composed of 14 different subunits. Subunits NuoA, H, J, K, L, M, N constitute the membrane sector of the complex.

The protein resides in the cell inner membrane. It carries out the reaction a quinone + NADH + 5 H(+)(in) = a quinol + NAD(+) + 4 H(+)(out). Its function is as follows. NDH-1 shuttles electrons from NADH, via FMN and iron-sulfur (Fe-S) centers, to quinones in the respiratory chain. The immediate electron acceptor for the enzyme in this species is believed to be ubiquinone. Couples the redox reaction to proton translocation (for every two electrons transferred, four hydrogen ions are translocated across the cytoplasmic membrane), and thus conserves the redox energy in a proton gradient. This subunit may bind ubiquinone. The protein is NADH-quinone oxidoreductase subunit H 1 of Cytophaga hutchinsonii (strain ATCC 33406 / DSM 1761 / CIP 103989 / NBRC 15051 / NCIMB 9469 / D465).